We begin with the raw amino-acid sequence, 166 residues long: Endoribonuclease YbeY (166 aa).

Zn(2+)-binding residues include His-132, His-136, and His-142.

This sequence belongs to the endoribonuclease YbeY family. It depends on Zn(2+) as a cofactor.

Its subcellular location is the cytoplasm. Its function is as follows. Single strand-specific metallo-endoribonuclease involved in late-stage 70S ribosome quality control and in maturation of the 3' terminus of the 16S rRNA. The protein is Endoribonuclease YbeY of Clostridium acetobutylicum (strain ATCC 824 / DSM 792 / JCM 1419 / IAM 19013 / LMG 5710 / NBRC 13948 / NRRL B-527 / VKM B-1787 / 2291 / W).